The primary structure comprises 106 residues: Cyclin-dependent protein kinase inhibitor SMR15 (106 aa).

Its function is as follows. Probable cyclin-dependent protein kinase (CDK) inhibitor that functions as a repressor of mitosis in the endoreduplication cell cycle. The polypeptide is Cyclin-dependent protein kinase inhibitor SMR15 (Arabidopsis thaliana (Mouse-ear cress)).